The primary structure comprises 316 residues: tRNA dimethylallyltransferase (316 aa).

17 to 24 (GPTASGKT) is a binding site for ATP. Residue 19–24 (TASGKT) participates in substrate binding. 4 interaction with substrate tRNA regions span residues 42-45 (DSAL), 166-170 (QRLSR), 247-252 (RCVGYR), and 280-287 (KRQITWLR).

The protein belongs to the IPP transferase family. Monomer. Mg(2+) serves as cofactor.

It catalyses the reaction adenosine(37) in tRNA + dimethylallyl diphosphate = N(6)-dimethylallyladenosine(37) in tRNA + diphosphate. In terms of biological role, catalyzes the transfer of a dimethylallyl group onto the adenine at position 37 in tRNAs that read codons beginning with uridine, leading to the formation of N6-(dimethylallyl)adenosine (i(6)A). The protein is tRNA dimethylallyltransferase of Escherichia coli O127:H6 (strain E2348/69 / EPEC).